A 205-amino-acid polypeptide reads, in one-letter code: LexA repressor (205 aa).

The H-T-H motif DNA-binding region spans 28-48 (RAELMRAFDFRSPNAAESHLR). Residues S120 and K159 each act as for autocatalytic cleavage activity in the active site.

Belongs to the peptidase S24 family. As to quaternary structure, homodimer.

The enzyme catalyses Hydrolysis of Ala-|-Gly bond in repressor LexA.. Its function is as follows. Represses a number of genes involved in the response to DNA damage (SOS response), including recA and lexA. In the presence of single-stranded DNA, RecA interacts with LexA causing an autocatalytic cleavage which disrupts the DNA-binding part of LexA, leading to derepression of the SOS regulon and eventually DNA repair. The sequence is that of LexA repressor from Acidithiobacillus ferrooxidans (strain ATCC 23270 / DSM 14882 / CIP 104768 / NCIMB 8455) (Ferrobacillus ferrooxidans (strain ATCC 23270)).